A 459-amino-acid chain; its full sequence is Vanillin aminotransferase (459 aa).

Residues 115–116 (GS) and Asp-255 each bind pyridoxal 5'-phosphate. N6-(pyridoxal phosphate)lysine is present on Lys-284. A pyridoxal 5'-phosphate-binding site is contributed by 320–321 (FT). A coiled-coil region spans residues 428–459 (LSLEELDELIRIYGKALKDTEKRVEELKSQKK).

The protein belongs to the class-III pyridoxal-phosphate-dependent aminotransferase family. As to expression, expressed in placental tissue of immature fruit.

The catalysed reaction is vanillin + L-alanine = vanillylamine + pyruvate. Its pathway is aromatic compound metabolism; phenylpropanoid biosynthesis. In terms of biological role, involved in the biosynthesis of capsaicinoids natural products, pungent alkaloids synthesized from phenylpropanoid intermediates in the placental tissue of chili pepper fruit acting as repellant on herbivorous mammals and conferring spiciness to hot peppers. Can transfer an amine from vanillylamine to pyruvate forming vanillin and L-alanine. Can use pyruvate or oxaloacetate, but not 2-oxoglutarate as amino group acceptors. Is able to convert (S)-1-phenylethylamine into acetophenone in vitro. The polypeptide is Vanillin aminotransferase (Capsicum chinense (Scotch bonnet)).